The chain runs to 440 residues: Chitinase-like protein Idgf2 (440 aa).

Residues 1-20 (MKAWIWFTFVACLFAASTEA) form the signal peptide. Residues 22–440 (SNLVCYYDSS…PILRAIKYRL (419 aa)) form the GH18 domain. Cysteine 26 and cysteine 53 form a disulfide bridge. Residue asparagine 220 is glycosylated (N-linked (GlcNAc...) asparagine). Cysteine 342 and cysteine 425 are oxidised to a cystine.

The protein belongs to the glycosyl hydrolase 18 family. IDGF subfamily. In terms of processing, glycosylated. Primarily expressed in yolk cells and fat body. In larvae, it is expressed in the imaginal ring and weakly expressed in imaginal disks. More strongly expressed than Idgf1 and Idgf3.

The protein localises to the secreted. Functionally, cooperates with insulin-like peptides to stimulate the proliferation, polarization and motility of imaginal disk cells. May act by stabilizing the binding of insulin-like peptides to its receptor through a simultaneous interaction with both molecules to form a multiprotein signaling complex. In Drosophila melanogaster (Fruit fly), this protein is Chitinase-like protein Idgf2 (Idgf2).